The primary structure comprises 230 residues: Small ribosomal subunit protein uS3 (230 aa).

The region spanning 39-107 is the KH type-2 domain; it reads VRKYLADKLQ…PAQINIAEIR (69 aa).

It belongs to the universal ribosomal protein uS3 family. As to quaternary structure, part of the 30S ribosomal subunit. Forms a tight complex with proteins S10 and S14.

Binds the lower part of the 30S subunit head. Binds mRNA in the 70S ribosome, positioning it for translation. The chain is Small ribosomal subunit protein uS3 from Shewanella oneidensis (strain ATCC 700550 / JCM 31522 / CIP 106686 / LMG 19005 / NCIMB 14063 / MR-1).